Reading from the N-terminus, the 671-residue chain is Oviduct-specific glycoprotein (671 aa).

The N-terminal stretch at 1–21 (MGRLLLWVGLVLLMKPNDGTA) is a signal peptide. The GH18 domain maps to 22–385 (YKLVCYFTNW…HILNELLVRA (364 aa)). An intrachain disulfide couples cysteine 26 to cysteine 51. Residues 71 to 72 (LQ), 98 to 101 (GGWN), tyrosine 142, 211 to 214 (LSYD), and tryptophan 355 contribute to the chitin site. An N-linked (GlcNAc...) asparagine glycan is attached at asparagine 402. 8 tandem repeats follow at residues 490–504 (TGMT…AGRE), 505–519 (TMTT…PGGE), 520–534 (TMTT…PGGE), 535–549 (TVTT…PGGE), 550–564 (TMTT…PGGE), 565–579 (TVTI…PVGE), 580–594 (TVTI…PGGQ), and 595–609 (TTAT…PPGM). The tract at residues 490-609 (TGMTVTVQTQ…GSQSVTPPGM (120 aa)) is 8 X 15 AA tandem repeats. N-linked (GlcNAc...) asparagine glycosylation is found at asparagine 511, asparagine 526, asparagine 541, asparagine 556, asparagine 571, and asparagine 586.

Belongs to the glycosyl hydrolase 18 family. In terms of processing, highly O-glycosylated and also N-glycosylated. As to expression, oviduct.

The protein localises to the cytoplasmic vesicle. It is found in the secretory vesicle. Its function is as follows. Binds to oocyte zona pellucida in vivo. May play a role in the fertilization process and/or early embryonic development. Might act as a protective secretion influencing the first steps of the reproductive process necessary for the normal triggering of fertilization and early embryonic development. The chain is Oviduct-specific glycoprotein (OVGP1) from Mesocricetus auratus (Golden hamster).